Consider the following 353-residue polypeptide: NADH-ubiquinone oxidoreductase chain 2 (353 aa).

8 helical membrane passes run 4-24 (SVVL…LSSH), 60-80 (FLVQ…QLWL), 96-116 (IVLT…FWFP), 139-159 (FIIL…TLGC), 198-218 (IYVG…VFLI), 241-261 (GNVL…TGFL), 274-294 (NLLV…FFYL), and 330-350 (VLLS…PALW).

Belongs to the complex I subunit 2 family.

It is found in the mitochondrion inner membrane. The enzyme catalyses a ubiquinone + NADH + 5 H(+)(in) = a ubiquinol + NAD(+) + 4 H(+)(out). Core subunit of the mitochondrial membrane respiratory chain NADH dehydrogenase (Complex I) that is believed to belong to the minimal assembly required for catalysis. Complex I functions in the transfer of electrons from NADH to the respiratory chain. The immediate electron acceptor for the enzyme is believed to be ubiquinone. In Pisaster ochraceus (Ochre sea star), this protein is NADH-ubiquinone oxidoreductase chain 2 (ND2).